A 224-amino-acid chain; its full sequence is Methylamine utilization ferredoxin-type protein MauM (224 aa).

A signal peptide spans 1 to 41 (MEARMTGRRKVTRRDAMADAARAVGVACLGGFSLAALVRTA). 4Fe-4S ferredoxin-type domains lie at 54-84 (ALPEQDFLAACVHCGLCVQACPYGTLSLAEW), 91-124 (GTPFFTPREVPCYMCKDVPCARACPTGALDRDIP), 133-169 (VAVLVGHETCLNYKGLNCSICVRVCPIRGDAISLEPQ), and 177-208 (MIPVVHSASCTGCGTCEKQCVLGHAAIRVLPR). Residues C64, C67, C70, C74, C102, C105, C110, C114, C142, C150, C153, C157, C186, C189, C192, and C196 each coordinate [4Fe-4S] cluster.

The protein operates within one-carbon metabolism; methylamine degradation. Its function is as follows. Involved in electron transfer. The sequence is that of Methylamine utilization ferredoxin-type protein MauM (mauM) from Paracoccus denitrificans (strain Pd 1222).